The following is a 367-amino-acid chain: Histidinol-phosphate aminotransferase (367 aa).

Lys227 bears the N6-(pyridoxal phosphate)lysine mark.

It belongs to the class-II pyridoxal-phosphate-dependent aminotransferase family. Histidinol-phosphate aminotransferase subfamily. Homodimer. The cofactor is pyridoxal 5'-phosphate.

It catalyses the reaction L-histidinol phosphate + 2-oxoglutarate = 3-(imidazol-4-yl)-2-oxopropyl phosphate + L-glutamate. Its pathway is amino-acid biosynthesis; L-histidine biosynthesis; L-histidine from 5-phospho-alpha-D-ribose 1-diphosphate: step 7/9. This is Histidinol-phosphate aminotransferase from Leptospira borgpetersenii serovar Hardjo-bovis (strain JB197).